A 187-amino-acid chain; its full sequence is Ubiquinone biosynthesis protein COQ4 homolog, mitochondrial (187 aa).

The Zn(2+) site is built by His-77, Asp-78, His-81, and Glu-93.

Belongs to the COQ4 family. As to quaternary structure, component of a multi-subunit COQ enzyme complex. Requires Zn(2+) as cofactor.

It localises to the mitochondrion inner membrane. It carries out the reaction a 4-hydroxy-3-methoxy-5-(all-trans-polyprenyl)benzoate + H(+) = a 2-methoxy-6-(all-trans-polyprenyl)phenol + CO2. It participates in cofactor biosynthesis; ubiquinone biosynthesis. Lyase that catalyzes the C1-decarboxylation of 4-hydroxy-3-methoxy-5-(all-trans-polyprenyl)benzoic acid into 2-methoxy-6-(all-trans-polyprenyl)phenol during ubiquinone biosynthesis. In Leishmania infantum, this protein is Ubiquinone biosynthesis protein COQ4 homolog, mitochondrial.